The sequence spans 466 residues: RUS family member 1 (466 aa).

Alanine 2 is subject to N-acetylalanine. The helical transmembrane segment at 245–265 (LLMLPLVSDCPSLSLGCFVLL) threads the bilayer.

Belongs to the RUS1 family.

It is found in the membrane. This chain is RUS family member 1, found in Mus musculus (Mouse).